The chain runs to 186 residues: Ribosome-recycling factor (186 aa).

The protein belongs to the RRF family.

Its subcellular location is the cytoplasm. Functionally, responsible for the release of ribosomes from messenger RNA at the termination of protein biosynthesis. May increase the efficiency of translation by recycling ribosomes from one round of translation to another. This is Ribosome-recycling factor from Maricaulis maris (strain MCS10) (Caulobacter maris).